Here is an 832-residue protein sequence, read N- to C-terminus: Ventricular zone-expressed PH domain-containing protein homolog 1 (832 aa).

The tract at residues 201 to 319 (AELLALMSQL…RYLVSQLANM (119 aa)) is interaction with TGFBR1. The segment at 497-519 (DTHGSQLRNSSASHPSIIHSEPE) is disordered. Residues 499–510 (HGSQLRNSSASH) show a composition bias toward polar residues. Residues 663–832 (ESTFPQQKDL…RESREVTTYL (170 aa)) are interaction with TGFBR1. The 103-residue stretch at 716 to 818 (QPLIEGKLKE…WLQCINVALA (103 aa)) folds into the PH domain.

Belongs to the MELT/VEPH family. In terms of assembly, interacts with TGFBR1.

It is found in the cell membrane. Its function is as follows. Interacts with TGF-beta receptor type-1 (TGFBR1) and inhibits dissociation of activated SMAD2 from TGFBR1, impeding its nuclear accumulation and resulting in impaired TGF-beta signaling. May also affect FOXO, Hippo and Wnt signaling. In Rattus norvegicus (Rat), this protein is Ventricular zone-expressed PH domain-containing protein homolog 1 (Veph1).